The sequence spans 143 residues: Large ribosomal subunit protein uL13 (143 aa).

Belongs to the universal ribosomal protein uL13 family. In terms of assembly, part of the 50S ribosomal subunit.

This protein is one of the early assembly proteins of the 50S ribosomal subunit, although it is not seen to bind rRNA by itself. It is important during the early stages of 50S assembly. The polypeptide is Large ribosomal subunit protein uL13 (Caldanaerobacter subterraneus subsp. tengcongensis (strain DSM 15242 / JCM 11007 / NBRC 100824 / MB4) (Thermoanaerobacter tengcongensis)).